The following is an 89-amino-acid chain: Aminoacyl carrier protein 2 (89 aa).

A Carrier domain is found at 6-84 (INVQNRVLSV…AMERMILNQL (79 aa)). Ser-42 bears the O-(pantetheine 4'-phosphoryl)serine mark.

4'-phosphopantetheine is transferred from CoA to a specific serine of the apo-form of this carrier protein.

Functionally, aminoacyl carrier protein. Can be charged with L-glycine via the formation of a thioester bond between the amino acid and the 4'-phosphopantetheinyl prosthetic group, catalyzed by the bll6282 ligase. The protein is Aminoacyl carrier protein 2 of Bradyrhizobium diazoefficiens (strain JCM 10833 / BCRC 13528 / IAM 13628 / NBRC 14792 / USDA 110).